A 1861-amino-acid chain; its full sequence is Golgi-specific brefeldin A-resistance guanine nucleotide exchange factor 1 (1861 aa).

A DCB; DCB:DCB domain and DCB:HUS domain interaction region spans residues 1-211; it reads MVDKNIYIIQ…EPKSYVGTNM (211 aa). The interval 1–380 is interaction with RAB1B; the sequence is MVDKNIYIIQ…SVHDMDYVNP (380 aa). Disordered stretches follow at residues 210–264 and 289–353; these read NMKK…LTGG and CTDS…VESI. Basic residues predominate over residues 227–241; sequence WKKQKRSPRPPRHTT. Residues 253-262 show a composition bias toward polar residues; the sequence is NGATLPSNLT. Phosphoserine occurs at positions 349 and 352. Position 507 is a phosphothreonine (Thr-507). An HUS; DCB:HUS domain interaction region spans residues 530–550; that stretch reads RIPSFVTELYINYDCDYYCSN. Positions 603 to 634 are disordered; sequence QEKKETARPGFEAVDGNPETNKSERATSDGKS. An SEC7 domain is found at 692 to 882; the sequence is ELIEIKNKKK…EDMYHAIKNE (191 aa). Residues 886–1372 are phosphatidylinositol-phosphate binding; required for translocation to the leading edge and for ARF1 activation upon GPCR signaling; the sequence is MPEEQTGLVR…LSRPGPSPLV (487 aa). Positions 1286–1296 are enriched in low complexity; it reads TARADAPDAGA. The segment at 1286-1335 is disordered; that stretch reads TARADAPDAGAQSDSELPSYHQNDVSLDRGYTSDSEVYTDHGRPGKIHRS. The span at 1297 to 1310 shows a compositional bias: polar residues; that stretch reads QSDSELPSYHQNDV. Ser-1298 carries the post-translational modification Phosphoserine. Position 1316 is a phosphotyrosine (Tyr-1316). Phosphoserine is present on residues Ser-1318, Ser-1320, and Ser-1335. Position 1337 is a phosphothreonine (Thr-1337). Disordered stretches follow at residues 1431 to 1486 and 1727 to 1812; these read GCKS…EGVP and PMPA…PLIL. Basic and acidic residues predominate over residues 1434–1448; that stretch reads SQDKRSKSHKYDSKG. Phosphoserine occurs at positions 1477, 1775, and 1786. A compositionally biased stretch (low complexity) spans 1776–1793; that stretch reads TRAPSSSSPGSPMASSPS.

As to quaternary structure, can form homodimers and probably homotetramers. Interacts with COPG1; the interaction is independent on ARF1 activation. Interacts with ARF1, ARF3, ARF4 and ARF5. Interacts with RAB1B (GTP-bound form); required for GBF1 membrane association. Interacts with GGA1, GGA2 and GGA3. Interacts with USO1. Interacts (via SEC7 domain) with PNPLA2 (via C-terminus); the interaction is direct. Interacts with ARMH3.

The protein localises to the golgi apparatus. The protein resides in the cis-Golgi network. It localises to the endoplasmic reticulum-Golgi intermediate compartment. It is found in the trans-Golgi network. Its subcellular location is the cytoplasm. The protein localises to the lipid droplet. The protein resides in the membrane. In terms of biological role, guanine-nucleotide exchange factor (GEF) for members of the Arf family of small GTPases involved in trafficking in the early secretory pathway; its GEF activity initiates the coating of nascent vesicles via the localized generation of activated ARFs through replacement of GDP with GTP. Recruitment to cis-Golgi membranes requires membrane association of Arf-GDP and can be regulated by ARF1, ARF3, ARF4 and ARF5. Involved in the recruitment of the COPI coat complex to the endoplasmic reticulum exit sites (ERES), and the endoplasmic reticulum-Golgi intermediate (ERGIC) and cis-Golgi compartments which implicates ARF1 activation. Involved in COPI vesicle-dependent retrograde transport from the ERGIC and cis-Golgi compartments to the endoplasmic reticulum (ER). Involved in the trans-Golgi network recruitment of GGA1, GGA2, GGA3, BIG1, BIG2, and the AP-1 adaptor protein complex related to chlathrin-dependent transport; the function requires its GEF activity (probably at least in part on ARF4 and ARF5). Has GEF activity towards ARF1. Has in vitro GEF activity towards ARF5. Involved in the processing of PSAP. Required for the assembly of the Golgi apparatus. The AMPK-phosphorylated form is involved in Golgi disassembly during mitotis and under stress conditions. May be involved in the COPI vesicle-dependent recruitment of PNPLA2 to lipid droplets; however, this function is under debate. In neutrophils, involved in G protein-coupled receptor (GPCR)-mediated chemotaxis und superoxide production. Proposed to be recruited by phosphatidylinositol-phosphates generated upon GPCR stimulation to the leading edge where it recruits and activates ARF1, and is involved in recruitment of GIT2 and the NADPH oxidase complex. Plays a role in maintaining mitochondrial morphology. In Mus musculus (Mouse), this protein is Golgi-specific brefeldin A-resistance guanine nucleotide exchange factor 1.